Reading from the N-terminus, the 94-residue chain is Trp operon repressor homolog (94 aa).

The DNA-binding element occupies 58 to 81 (QREIAEKYGVSIAQITRGSNALKG).

It belongs to the TrpR family. As to quaternary structure, homodimer.

The protein localises to the cytoplasm. This protein is an aporepressor. When complexed with L-tryptophan it binds the operator region of the trp operon and prevents the initiation of transcription. In Chlamydia trachomatis serovar A (strain ATCC VR-571B / DSM 19440 / HAR-13), this protein is Trp operon repressor homolog.